A 416-amino-acid polypeptide reads, in one-letter code: Lysosome-associated membrane glycoprotein 3 (416 aa).

Positions 1 to 27 are cleaved as a signal peptide; sequence MPRQLSAAAALFASLAVILHDGSQMRA. Over 28 to 381 the chain is Lumenal; that stretch reads KAFPETRDYS…NVDECSSDYT (354 aa). N-linked (GlcNAc...) asparagine glycans are attached at residues N112, N158, N164, N200, N232, N266, and N291. Disordered stretches follow at residues 136-167 and 179-219; these read PTIT…NQTT and STTG…LAPQ. Positions 143-160 are enriched in low complexity; it reads HTTGTSSSTVSHTTGNTT. Low complexity predominate over residues 188 to 208; sequence PTHAPGTTAAAHNTTRTAAPA. C237 and C274 are disulfide-bonded. C339 and C376 are oxidised to a cystine. Residues 382–402 form a helical membrane-spanning segment; it reads IVLPVIGAIVVGLCLMGMGVY. Over 403 to 416 the chain is Cytoplasmic; the sequence is KIRLRCQSSGYQRI.

This sequence belongs to the LAMP family. In terms of assembly, monomer. Interacts with FURIN. As to quaternary structure, (Microbial infection) Interacts with mumps virus protein F; this interaction promotes protein F cleavage by FURIN. In terms of tissue distribution, detected in tonsil interdigitating dendritic cells, in spleen, lymph node, Peyer's patches in the small instestine, in thymus medulla and in B-cells (at protein level). Expressed in lymphoid organs and dendritic cells. Expressed in lung. Up-regulated in carcinomas of the esophagus, colon, rectum, ureter, stomach, breast, fallopian tube, thyroid and parotid tissues.

It is found in the cell surface. Its subcellular location is the lysosome membrane. It localises to the cytoplasmic vesicle membrane. The protein localises to the early endosome membrane. Functionally, lysosomal membrane glycoprotein which plays a role in the unfolded protein response (UPR) that contributes to protein degradation and cell survival during proteasomal dysfunction. Plays a role in the process of fusion of the lysosome with the autophagosome, thereby modulating the autophagic process. Promotes hepatocellular lipogenesis through activation of the PI3K/Akt pathway. May also play a role in dendritic cell function and in adaptive immunity. Its function is as follows. (Microbial infection) Plays a positive role in post-entry steps of influenza A virus replication, either virus uncoating, cytosolic transport, or nuclear import of viral components, and promotes nuclear accumulation of influenza nucleoprotein/NP at early stages of viral infection. (Microbial infection) Supports the FURIN-mediated cleavage of mumps virus fusion protein F by interacting with both FURIN and the unprocessed form but not the processed form of the viral protein F. In terms of biological role, (Microbial infection) Promotes the intracellular proliferation of Salmonella typhimuium. The sequence is that of Lysosome-associated membrane glycoprotein 3 (LAMP3) from Homo sapiens (Human).